A 350-amino-acid polypeptide reads, in one-letter code: Holliday junction branch migration complex subunit RuvB (350 aa).

Residues 1 to 182 form a large ATPase domain (RuvB-L) region; it reads MEDRIVTPLN…FGVLCPMDFY (182 aa). Residues Leu21, Arg22, Gly63, Lys66, Thr67, Thr68, 129-131, Arg172, Tyr182, and Arg219 contribute to the ATP site; that span reads EDY. Thr67 is a binding site for Mg(2+). The small ATPAse domain (RuvB-S) stretch occupies residues 183–253; it reads DQEELSEIVV…TSKAALELLE (71 aa). Residues 256–350 form a head domain (RuvB-H) region; that stretch reads KEGFDSIDNK…KQSSLFDGEV (95 aa). DNA-binding residues include Arg311 and Arg316.

This sequence belongs to the RuvB family. In terms of assembly, homohexamer. Forms an RuvA(8)-RuvB(12)-Holliday junction (HJ) complex. HJ DNA is sandwiched between 2 RuvA tetramers; dsDNA enters through RuvA and exits via RuvB. An RuvB hexamer assembles on each DNA strand where it exits the tetramer. Each RuvB hexamer is contacted by two RuvA subunits (via domain III) on 2 adjacent RuvB subunits; this complex drives branch migration. In the full resolvosome a probable DNA-RuvA(4)-RuvB(12)-RuvC(2) complex forms which resolves the HJ.

It localises to the cytoplasm. The catalysed reaction is ATP + H2O = ADP + phosphate + H(+). Its function is as follows. The RuvA-RuvB-RuvC complex processes Holliday junction (HJ) DNA during genetic recombination and DNA repair, while the RuvA-RuvB complex plays an important role in the rescue of blocked DNA replication forks via replication fork reversal (RFR). RuvA specifically binds to HJ cruciform DNA, conferring on it an open structure. The RuvB hexamer acts as an ATP-dependent pump, pulling dsDNA into and through the RuvAB complex. RuvB forms 2 homohexamers on either side of HJ DNA bound by 1 or 2 RuvA tetramers; 4 subunits per hexamer contact DNA at a time. Coordinated motions by a converter formed by DNA-disengaged RuvB subunits stimulates ATP hydrolysis and nucleotide exchange. Immobilization of the converter enables RuvB to convert the ATP-contained energy into a lever motion, pulling 2 nucleotides of DNA out of the RuvA tetramer per ATP hydrolyzed, thus driving DNA branch migration. The RuvB motors rotate together with the DNA substrate, which together with the progressing nucleotide cycle form the mechanistic basis for DNA recombination by continuous HJ branch migration. Branch migration allows RuvC to scan DNA until it finds its consensus sequence, where it cleaves and resolves cruciform DNA. This Clostridium kluyveri (strain NBRC 12016) protein is Holliday junction branch migration complex subunit RuvB.